Here is a 398-residue protein sequence, read N- to C-terminus: CCA-adding enzyme (398 aa).

2 residues coordinate ATP: G32 and R35. CTP-binding residues include G32 and R35. Residues D45 and D47 each coordinate Mg(2+). The ATP site is built by R116, D159, R162, R165, and R168. CTP contacts are provided by R116, D159, R162, R165, and R168.

It belongs to the tRNA nucleotidyltransferase/poly(A) polymerase family. Bacterial CCA-adding enzyme type 3 subfamily. In terms of assembly, homodimer. Requires Mg(2+) as cofactor.

The catalysed reaction is a tRNA precursor + 2 CTP + ATP = a tRNA with a 3' CCA end + 3 diphosphate. The enzyme catalyses a tRNA with a 3' CCA end + 2 CTP + ATP = a tRNA with a 3' CCACCA end + 3 diphosphate. Its function is as follows. Catalyzes the addition and repair of the essential 3'-terminal CCA sequence in tRNAs without using a nucleic acid template. Adds these three nucleotides in the order of C, C, and A to the tRNA nucleotide-73, using CTP and ATP as substrates and producing inorganic pyrophosphate. tRNA 3'-terminal CCA addition is required both for tRNA processing and repair. Also involved in tRNA surveillance by mediating tandem CCA addition to generate a CCACCA at the 3' terminus of unstable tRNAs. While stable tRNAs receive only 3'-terminal CCA, unstable tRNAs are marked with CCACCA and rapidly degraded. This Lacticaseibacillus paracasei (strain ATCC 334 / BCRC 17002 / CCUG 31169 / CIP 107868 / KCTC 3260 / NRRL B-441) (Lactobacillus paracasei) protein is CCA-adding enzyme.